A 367-amino-acid polypeptide reads, in one-letter code: Phosphoribosylaminoimidazole-succinocarboxamide synthase (367 aa).

Belongs to the SAICAR synthetase family.

It catalyses the reaction 5-amino-1-(5-phospho-D-ribosyl)imidazole-4-carboxylate + L-aspartate + ATP = (2S)-2-[5-amino-1-(5-phospho-beta-D-ribosyl)imidazole-4-carboxamido]succinate + ADP + phosphate + 2 H(+). It functions in the pathway purine metabolism; IMP biosynthesis via de novo pathway; 5-amino-1-(5-phospho-D-ribosyl)imidazole-4-carboxamide from 5-amino-1-(5-phospho-D-ribosyl)imidazole-4-carboxylate: step 1/2. This is Phosphoribosylaminoimidazole-succinocarboxamide synthase from Shewanella baltica (strain OS223).